Here is a 199-residue protein sequence, read N- to C-terminus: Recombination protein RecR (199 aa).

Residues 56–71 form a C4-type zinc finger; that stretch reads CTVCFNVTEQETCNIC. The 96-residue stretch at 79-174 folds into the Toprim domain; that stretch reads SVICVVEESK…TVTRLASGLP (96 aa).

This sequence belongs to the RecR family.

In terms of biological role, may play a role in DNA repair. It seems to be involved in an RecBC-independent recombinational process of DNA repair. It may act with RecF and RecO. This Paenarthrobacter aurescens (strain TC1) protein is Recombination protein RecR.